The primary structure comprises 287 residues: Thioredoxin-related transmembrane protein 2 (287 aa).

The N-terminal stretch at 1–13 (MAVLAPLLAVLYA) is a signal peptide. The Extracellular portion of the chain corresponds to 14-112 (APGLLRWVSQ…ILFFRLDLRM (99 aa)). A helical transmembrane segment spans residues 113–133 (GLLYITLCIVFLMTCKPPLYL). Residues 134–287 (GPEHIKYFSD…NEWNDGKKDQ (154 aa)) lie on the Cytoplasmic side of the membrane. Residues 137-209 (HIKYFSDKTL…PEVSCRYSIS (73 aa)) form the Thioredoxin domain. The Di-lysine motif signature appears at 284–287 (KKDQ).

In terms of assembly, monomer. Homodimer; disulfide-linked. Occurs in both reduced and oxidized monomeric form. Oxidative conditions increase homodimerization.

It localises to the endoplasmic reticulum membrane. The protein localises to the mitochondrion membrane. Functionally, endoplasmic reticulum and mitochondria-associated protein that probably functions as a regulator of cellular redox state and thereby regulates protein post-translational modification, protein folding and mitochondrial activity. The protein is Thioredoxin-related transmembrane protein 2 (tmx2) of Xenopus laevis (African clawed frog).